We begin with the raw amino-acid sequence, 101 residues long: Protein S100-A7 (101 aa).

Residue Ser-2 is modified to N-acetylserine. 2 EF-hand domains span residues Met-13–Asp-48 and Lys-50–Asp-85. Zn(2+) is bound by residues His-18 and Asp-25. A disulfide bridge connects residues Cys-47 and Cys-96. Asp-63, Asn-65, Asp-67, Lys-69, and Glu-74 together coordinate Ca(2+). The Zn(2+) site is built by His-87 and His-91.

As to quaternary structure, interacts with RANBP9. In terms of tissue distribution, fetal ear, skin, and tongue and human cell lines. Highly up-regulated in psoriatic epidermis. Also highly expressed in the urine of bladder squamous cell carcinoma (SCC) bearing patients.

The protein localises to the cytoplasm. It is found in the secreted. The protein is Protein S100-A7 (S100A7) of Homo sapiens (Human).